The following is a 241-amino-acid chain: Uridylate kinase (241 aa).

12–15 provides a ligand contact to ATP; it reads KLSG. An involved in allosteric activation by GTP region spans residues 20–25; that stretch reads GATGYG. Residue Gly54 coordinates UMP. Positions 55 and 59 each coordinate ATP. UMP is bound by residues Asp74 and 135–142; that span reads TGNPYMTT. The ATP site is built by Asn163, Tyr169, and Asp172.

The protein belongs to the UMP kinase family. As to quaternary structure, homohexamer.

The protein localises to the cytoplasm. The enzyme catalyses UMP + ATP = UDP + ADP. It participates in pyrimidine metabolism; CTP biosynthesis via de novo pathway; UDP from UMP (UMPK route): step 1/1. With respect to regulation, allosterically activated by GTP. Inhibited by UTP. Its function is as follows. Catalyzes the reversible phosphorylation of UMP to UDP. The polypeptide is Uridylate kinase (Dehalococcoides mccartyi (strain CBDB1)).